The chain runs to 776 residues: Probable inorganic carbon transporter subunit DabA (776 aa).

The Zn(2+) site is built by cysteine 313, aspartate 315, histidine 473, and cysteine 488.

Belongs to the inorganic carbon transporter (TC 9.A.2) DabA family. As to quaternary structure, forms a complex with DabB. Requires Zn(2+) as cofactor.

The protein localises to the cell inner membrane. In terms of biological role, part of an energy-coupled inorganic carbon pump. The sequence is that of Probable inorganic carbon transporter subunit DabA from Chromobacterium violaceum (strain ATCC 12472 / DSM 30191 / JCM 1249 / CCUG 213 / NBRC 12614 / NCIMB 9131 / NCTC 9757 / MK).